Consider the following 440-residue polypeptide: WAS/WASL-interacting protein family member 2 (440 aa).

Positions 1–18 (MPIPPPPPPPPGPPPPPT) are enriched in pro residues. Positions 1 to 38 (MPIPPPPPPPPGPPPPPTFNQANTEQPKLSRDEQRNRG) are disordered. The WH2 domain maps to 36-53 (NRGALLQDICKGTKLKKV). Arg-37 bears the Asymmetric dimethylarginine mark. A binds actin region spans residues 49–52 (KLKK). Disordered stretches follow at residues 56–386 (VNDR…RDSI) and 419–440 (RVYPSKTNRAARGAPPLPPILR). Over residues 116-132 (PSSRAAAPRPPGSAASG) the composition is skewed to low complexity. Pro residues-rich tracts occupy residues 176-193 (APPPPPPGRRANAPPTPL), 225-236 (PAPPPVKPPPSP), 249-262 (APPPPPYRQPPGVP), and 356-378 (RGKPPPPPSRTPAGPPPPPPPPL).

Belongs to the verprolin family. In terms of assembly, interacts with WASL and WASP, and this interaction results in cytoplasmic relocation of these two proteins along actin filaments. Interacts with NCK2 resulting in the localization to sites of focal adhesions.

The protein resides in the cytoplasm. It is found in the cytoskeleton. Its function is as follows. Plays an active role in the formation of cell surface protrusions downstream of activated PDGFB receptors. Plays an important role in actin-microspike formation through cooperation with WASL. May cooperate with WASP and WASL to induce mobilization and reorganization of the actin filament system. This chain is WAS/WASL-interacting protein family member 2 (Wipf2), found in Mus musculus (Mouse).